Reading from the N-terminus, the 456-residue chain is tRNA modification GTPase MnmE (456 aa).

(6S)-5-formyl-5,6,7,8-tetrahydrofolate is bound by residues arginine 25, glutamate 87, and arginine 126. Residues 221–377 (GLKVAIVGQP…LENAIIEQVN (157 aa)) form the TrmE-type G domain. Asparagine 231 is a K(+) binding site. GTP contacts are provided by residues 231–236 (NVGKSS), 250–256 (TDLPGTT), and 275–278 (DTAG). Residue serine 235 participates in Mg(2+) binding. K(+) is bound by residues threonine 250, leucine 252, and threonine 255. Threonine 256 is a binding site for Mg(2+). Lysine 456 provides a ligand contact to (6S)-5-formyl-5,6,7,8-tetrahydrofolate.

Belongs to the TRAFAC class TrmE-Era-EngA-EngB-Septin-like GTPase superfamily. TrmE GTPase family. As to quaternary structure, homodimer. Heterotetramer of two MnmE and two MnmG subunits. Requires K(+) as cofactor.

It is found in the cytoplasm. Exhibits a very high intrinsic GTPase hydrolysis rate. Involved in the addition of a carboxymethylaminomethyl (cmnm) group at the wobble position (U34) of certain tRNAs, forming tRNA-cmnm(5)s(2)U34. This chain is tRNA modification GTPase MnmE, found in Synechocystis sp. (strain ATCC 27184 / PCC 6803 / Kazusa).